Here is a 464-residue protein sequence, read N- to C-terminus: NADH-quinone oxidoreductase subunit N (464 aa).

14 helical membrane passes run 6–26 (FLYI…LVLG), 36–56 (SMSL…LIYF), 75–95 (CLAR…FFFA), 101–121 (YEFA…VEAH), 123–143 (FLSF…LVCF), 157–177 (FFVL…LVYG), 197–217 (LGAT…LGAV), 231–253 (PTVA…FAGL), 257–279 (VVIP…MVVG), 293–313 (FAYA…TGVV), 317–337 (PVLF…TVLL), 360–380 (AFTF…SGFF), 395–415 (FGVP…IPCF), and 439–459 (NVGL…VVLL).

It belongs to the complex I subunit 2 family. In terms of assembly, NDH-1 is composed of 14 different subunits. Subunits NuoA, H, J, K, L, M, N constitute the membrane sector of the complex.

The protein resides in the cell inner membrane. It carries out the reaction a quinone + NADH + 5 H(+)(in) = a quinol + NAD(+) + 4 H(+)(out). NDH-1 shuttles electrons from NADH, via FMN and iron-sulfur (Fe-S) centers, to quinones in the respiratory chain. The immediate electron acceptor for the enzyme in this species is believed to be ubiquinone. Couples the redox reaction to proton translocation (for every two electrons transferred, four hydrogen ions are translocated across the cytoplasmic membrane), and thus conserves the redox energy in a proton gradient. This chain is NADH-quinone oxidoreductase subunit N, found in Anaplasma phagocytophilum (strain HZ).